The sequence spans 967 residues: Phosphoenolpyruvate carboxylase (967 aa).

A Phosphoserine modification is found at S10. Residues H171 and K601 contribute to the active site. A disordered region spans residues 915 to 936 (NASRLPLSRESPEATKPADELV). Positions 924–933 (ESPEATKPAD) are enriched in basic and acidic residues.

It belongs to the PEPCase type 1 family. In terms of assembly, homotetramer. Requires Mg(2+) as cofactor.

The protein resides in the cytoplasm. The catalysed reaction is oxaloacetate + phosphate = phosphoenolpyruvate + hydrogencarbonate. With respect to regulation, by light-reversible phosphorylation. Functionally, through the carboxylation of phosphoenolpyruvate (PEP) it forms oxaloacetate, a four-carbon dicarboxylic acid source for the tricarboxylic acid cycle. The chain is Phosphoenolpyruvate carboxylase from Pisum sativum (Garden pea).